The sequence spans 199 residues: NADH-quinone oxidoreductase subunit B 2 (199 aa).

[4Fe-4S] cluster-binding residues include Cys-78, Cys-79, Cys-143, and Cys-173.

It belongs to the complex I 20 kDa subunit family. NDH-1 is composed of 14 different subunits. Subunits NuoB, C, D, E, F, and G constitute the peripheral sector of the complex. [4Fe-4S] cluster is required as a cofactor.

The protein localises to the cell inner membrane. It carries out the reaction a quinone + NADH + 5 H(+)(in) = a quinol + NAD(+) + 4 H(+)(out). NDH-1 shuttles electrons from NADH, via FMN and iron-sulfur (Fe-S) centers, to quinones in the respiratory chain. The immediate electron acceptor for the enzyme in this species is believed to be ubiquinone. Couples the redox reaction to proton translocation (for every two electrons transferred, four hydrogen ions are translocated across the cytoplasmic membrane), and thus conserves the redox energy in a proton gradient. This is NADH-quinone oxidoreductase subunit B 2 from Rhodopseudomonas palustris (strain BisB5).